The sequence spans 100 residues: Ribosomal biogenesis factor (100 aa).

At Ser-19 the chain carries Phosphoserine. Lys-21 carries the N6-acetyllysine modification. Ser-69 carries the post-translational modification Phosphoserine.

As to quaternary structure, associates with the pre-60S ribosomal particles.

It is found in the nucleus. It localises to the nucleolus. Its function is as follows. Trans-acting factor in ribosome biogenesis required for efficient 40S and 60S subunit production. The sequence is that of Ribosomal biogenesis factor (RBIS) from Bos taurus (Bovine).